The primary structure comprises 64 residues: Large ribosomal subunit protein bL28 (64 aa).

Belongs to the bacterial ribosomal protein bL28 family.

This chain is Large ribosomal subunit protein bL28, found in Campylobacter jejuni subsp. doylei (strain ATCC BAA-1458 / RM4099 / 269.97).